We begin with the raw amino-acid sequence, 123 residues long: Protein Wnt-3b (123 aa).

The O-palmitoleoyl serine; by PORCN moiety is linked to residue Ser1. A disulfide bridge connects residues Cys89 and Cys104. An N-linked (GlcNAc...) asparagine glycan is attached at Asn90.

The protein belongs to the Wnt family. Palmitoleoylation is required for efficient binding to frizzled receptors. Depalmitoleoylation leads to Wnt signaling pathway inhibition.

It is found in the secreted. It localises to the extracellular space. Its subcellular location is the extracellular matrix. Functionally, ligand for members of the frizzled family of seven transmembrane receptors. Probable developmental protein. May be a signaling molecule which affects the development of discrete regions of tissues. Is likely to signal over only few cell diameters. The protein is Protein Wnt-3b (WNT-3B) of Alopias vulpinus (Common thresher shark).